We begin with the raw amino-acid sequence, 749 residues long: Cytosolic phospholipase A2 (749 aa).

The tract at residues 1–178 (MSFIDPYQHI…MKKLLGPKNS (178 aa)) is phospholipid binding. A Phosphoserine modification is found at Ser2. The 117-residue stretch at 6–122 (PYQHIIVEHH…KVGEKKQVPF (117 aa)) folds into the C2 domain. Asp40, Thr41, Asp43, Asn65, Asp93, Ala94, and Asn95 together coordinate Ca(2+). The region spanning 140–740 (SSPDLRFSMA…SSVEARRFFN (601 aa)) is the PLA2c domain. The Nucleophile role is filled by Ser228. Thr268 is modified (phosphothreonine). A disordered region spans residues 426 to 458 (AKHIVSNDSSDSDDESQGPKGTEHEEAEREYQN). Phosphoserine is present on residues Ser434, Ser435, and Ser437. Residues 446 to 457 (GTEHEEAEREYQ) show a composition bias toward basic and acidic residues. Phosphoserine; by MAPK is present on Ser505. Ser515 carries the post-translational modification Phosphoserine. A Glycyl lysine isopeptide (Lys-Gly) (interchain with G-Cter in SUMO2) cross-link involves residue Lys541. Asp549 functions as the Proton acceptor in the catalytic mechanism. A Glycyl lysine isopeptide (Lys-Gly) (interchain with G-Cter in SUMO2) cross-link involves residue Lys606. Phosphoserine occurs at positions 727 and 729.

In terms of assembly, interacts with KAT5. In terms of processing, phosphorylated at both Ser-505 and Ser-727 in response to mitogenic stimuli. As to expression, detected in granulosa cells after stimulation with chorionic gonadotropin (at protein level).

It is found in the cytoplasm. The protein localises to the golgi apparatus membrane. Its subcellular location is the nucleus envelope. It carries out the reaction a 1,2-diacyl-sn-glycero-3-phosphocholine + H2O = a 1-acyl-sn-glycero-3-phosphocholine + a fatty acid + H(+). It catalyses the reaction a 1-O-alkyl-2-acyl-sn-glycero-3-phosphocholine + H2O = a 1-O-alkyl-sn-glycero-3-phosphocholine + a fatty acid + H(+). The enzyme catalyses a 1-acyl-sn-glycero-3-phosphocholine + H2O = sn-glycerol 3-phosphocholine + a fatty acid + H(+). The catalysed reaction is 1-hexadecanoyl-2-(5Z,8Z,11Z,14Z-eicosatetraenoyl)-sn-glycero-3-phosphocholine + H2O = 1-hexadecanoyl-sn-glycero-3-phosphocholine + (5Z,8Z,11Z,14Z)-eicosatetraenoate + H(+). It carries out the reaction 1,2-di-(5Z,8Z,11Z,14Z-eicosatetraenoyl)-sn-glycero-3-phosphocholine + H2O = 1-(5Z,8Z,11Z,14Z-eicosatetraenoyl)-sn-glycero-3-phosphocholine + (5Z,8Z,11Z,14Z)-eicosatetraenoate + H(+). It catalyses the reaction 1-octadecanoyl-2-(5Z,8Z,11Z,14Z-eicosatetraenoyl)-sn-glycero-3-phosphocholine + H2O = 1-octadecanoyl-sn-glycero-3-phosphocholine + (5Z,8Z,11Z,14Z)-eicosatetraenoate + H(+). The enzyme catalyses 1-hexadecanoyl-2-(9Z,12Z-octadecadienoyl)-sn-glycero-3-phosphocholine + H2O = (9Z,12Z)-octadecadienoate + 1-hexadecanoyl-sn-glycero-3-phosphocholine + H(+). The catalysed reaction is 1-octadecanoyl-2-(9Z,12Z,15Z-octadecatrienoyl)-sn-glycero-3-phosphocholine + H2O = (9Z,12Z,15Z)-octadecatrienoate + 1-octadecanoyl-sn-glycero-3-phosphocholine + H(+). It carries out the reaction 1-(5Z,8Z,11Z,14Z-eicosatetraenoyl)-2-hexadecanoyl-sn-glycero-3-phosphocholine + H2O = 1-(5Z,8Z,11Z,14Z-eicosatetraenoyl)-sn-glycero-3-phosphocholine + hexadecanoate + H(+). It catalyses the reaction 1-O-hexadecyl-2-(5Z,8Z,11Z,14Z)-eicosatetraenoyl-sn-glycero-3-phosphocholine + H2O = 1-O-hexadecyl-sn-glycero-3-phosphocholine + (5Z,8Z,11Z,14Z)-eicosatetraenoate + H(+). The enzyme catalyses 1,2-di-(9Z-octadecenoyl)-sn-glycero-3-phospho-(1'-sn-glycerol) + H2O = 1-(9Z-octadecenoyl)-sn-glycero-3-phospho-(1'-sn-glycerol) + (9Z)-octadecenoate + H(+). The catalysed reaction is 1-octadecanoyl-2-(5Z,8Z,11Z,14Z-eicosatetraenoyl)-sn-glycero-3-phosphate + H2O = 1-octadecanoyl-sn-glycero-3-phosphate + (5Z,8Z,11Z,14Z)-eicosatetraenoate + H(+). It carries out the reaction 1-hexadecanoyl-sn-glycero-3-phosphocholine + H2O = sn-glycerol 3-phosphocholine + hexadecanoate + H(+). It catalyses the reaction 2-(prostaglandin E2)-sn-glycero-3-phosphoethanolamine + H2O = sn-glycero-3-phosphoethanolamine + prostaglandin E2 + H(+). The enzyme catalyses 2-[(15S)-hydroxy-(5Z,8Z,11Z,13E)-eicosatetraenoyl]-sn-glycero-3-phosphocholine + H2O = (15S)-hydroxy-(5Z,8Z,11Z,13E)-eicosatetraenoate + sn-glycerol 3-phosphocholine + H(+). The catalysed reaction is 2-[(15R)-hydroxy-(5Z,8Z,11Z,13E)-eicosatetraenoyl]-sn-glycero-3-phosphocholine + H2O = (15R)-hydroxy-(5Z,8Z,11Z,13E)-eicosatetraenoate + sn-glycerol 3-phosphocholine + H(+). It carries out the reaction 2-(prostaglandin E2)-sn-glycero-3-phosphocholine + H2O = prostaglandin E2 + sn-glycerol 3-phosphocholine + H(+). It catalyses the reaction 2-[(11R)-hydroxy-(5Z,8Z,12E,14Z)-eicosatetraenoyl]-sn-glycero-3-phosphocholine + H2O = (11R)-hydroxy-(5Z,8Z,12E,14Z)-eicosatetraenoate + sn-glycerol 3-phosphocholine + H(+). The enzyme catalyses 1-(5Z,8Z,11Z,14Z-eicosatetraenoyl)-2-O-hexadecyl-sn-glycero-3-phosphocholine + H2O = 2-O-hexadecyl-sn-glycero-3-phosphocholine + (5Z,8Z,11Z,14Z)-eicosatetraenoate + H(+). The catalysed reaction is 1-octadecanoyl-2-(5Z,8Z,11Z,14Z-eicosatetraenoyl)-sn-glycero-3-phosphocholine + glycerol = 1-(5Z,8Z,11Z,14Z-eicosatetraenoyl)-glycerol + 1-octadecanoyl-sn-glycero-3-phosphocholine. It carries out the reaction 1-octadecanoyl-2-(9Z,12Z,15Z-octadecatrienoyl)-sn-glycero-3-phosphocholine + glycerol = 1-(9Z,12Z,15Z-octadecatrienoyl)-glycerol + 1-octadecanoyl-sn-glycero-3-phosphocholine. The protein operates within membrane lipid metabolism; glycerophospholipid metabolism. It functions in the pathway lipid metabolism; arachidonate metabolism. Its pathway is lipid metabolism; prostaglandin biosynthesis. It participates in lipid metabolism; leukotriene B4 biosynthesis. Activated by cytosolic calcium, which is necessary for binding to membrane lipids. Activated by phosphorylation in response to mitogenic stimuli. Has primarily calcium-dependent phospholipase and lysophospholipase activities, with a major role in membrane lipid remodeling and biosynthesis of lipid mediators of the inflammatory response. Plays an important role in embryo implantation and parturition through its ability to trigger prostanoid production. Preferentially hydrolyzes the ester bond of the fatty acyl group attached at sn-2 position of phospholipids (phospholipase A2 activity). Selectively hydrolyzes sn-2 arachidonoyl group from membrane phospholipids, providing the precursor for eicosanoid biosynthesis via the cyclooxygenase pathway. In an alternative pathway of eicosanoid biosynthesis, hydrolyzes sn-2 fatty acyl chain of eicosanoid lysophopholipids to release free bioactive eicosanoids. Hydrolyzes the ester bond of the fatty acyl group attached at sn-1 position of phospholipids (phospholipase A1 activity) only if an ether linkage rather than an ester linkage is present at the sn-2 position. This hydrolysis is not stereospecific. Has calcium-independent phospholipase A2 and lysophospholipase activities in the presence of phosphoinositides. Has O-acyltransferase activity. Catalyzes the transfer of fatty acyl chains from phospholipids to a primary hydroxyl group of glycerol (sn-1 or sn-3), potentially contributing to monoacylglycerol synthesis. The sequence is that of Cytosolic phospholipase A2 (PLA2G4A) from Bos taurus (Bovine).